A 535-amino-acid chain; its full sequence is Dimethylaniline monooxygenase [N-oxide-forming] 2 (535 aa).

Ala2 is subject to N-acetylalanine. FAD-binding positions include 9–13, Glu32, 40–41, and 61–62; these read GAGVS, VW, and NT. Residues 60-61 and 195-198 each bind NADP(+); these read TN and SGSD. Lys492 is covalently cross-linked (Glycyl lysine isopeptide (Lys-Gly) (interchain with G-Cter in SUMO)). The helical transmembrane segment at 510–530 threads the bilayer; that stretch reads FSVSFLLKILGLLAVVVAFFC.

This sequence belongs to the FMO family. FAD serves as cofactor. Requires Mg(2+) as cofactor.

The protein localises to the microsome membrane. It is found in the endoplasmic reticulum membrane. Its function is as follows. Catalyzes the oxidative metabolism of numerous xenobiotics, including mainly therapeutic drugs and insecticides that contain a soft nucleophile, most commonly nitrogen and sulfur and participates to their bioactivation. The sequence is that of Dimethylaniline monooxygenase [N-oxide-forming] 2 from Pan troglodytes (Chimpanzee).